A 275-amino-acid polypeptide reads, in one-letter code: Protein COFACTOR ASSEMBLY OF COMPLEX C SUBUNIT B CCB2, chloroplastic (275 aa).

A chloroplast-targeting transit peptide spans 1–19; the sequence is MSIQICNFPFHPKFALQPR. Over 20-65 the chain is Stromal; that stretch reads AQRSTRIFARTENDSPQSKTSDQQLNLSVLRFTFGIPGFDESYLPR. The helical transmembrane segment at 66–86 threads the bilayer; that stretch reads WIGYGFGSLLLLNHFSASAPI. Over 87–93 the chain is Lumenal; it reads SESQMRS. A helical transmembrane segment spans residues 94–114; that stretch reads EALGLSLAAFSIALPYIGKFL. At 115-275 the chain is on the stromal side; it reads KGSVVEQRSL…IGAMAEKFRG (161 aa).

It is found in the plastid. Its subcellular location is the chloroplast thylakoid membrane. Required for the biogenesis and accumulation of native cytochrome b6 in the thylakoid membrane. Controls the conversion of apocytochrome b6 to holocytochrome b6. Required for covalent binding of the c-type heme to cytochrome b6. This chain is Protein COFACTOR ASSEMBLY OF COMPLEX C SUBUNIT B CCB2, chloroplastic, found in Arabidopsis thaliana (Mouse-ear cress).